Here is a 512-residue protein sequence, read N- to C-terminus: 2-isopropylmalate synthase (512 aa).

The 264-residue stretch at 5–268 (LIIFDTTLRD…DLGIATQHIL (264 aa)) folds into the Pyruvate carboxyltransferase domain. Residues Asp14, His202, His204, and Asn239 each contribute to the Mn(2+) site. Residues 394 to 512 (GFVSLFQQSE…NKADRVAAQG (119 aa)) are regulatory domain.

It belongs to the alpha-IPM synthase/homocitrate synthase family. LeuA type 1 subfamily. In terms of assembly, homodimer. Mn(2+) serves as cofactor.

The protein resides in the cytoplasm. The enzyme catalyses 3-methyl-2-oxobutanoate + acetyl-CoA + H2O = (2S)-2-isopropylmalate + CoA + H(+). Its pathway is amino-acid biosynthesis; L-leucine biosynthesis; L-leucine from 3-methyl-2-oxobutanoate: step 1/4. Functionally, catalyzes the condensation of the acetyl group of acetyl-CoA with 3-methyl-2-oxobutanoate (2-ketoisovalerate) to form 3-carboxy-3-hydroxy-4-methylpentanoate (2-isopropylmalate). This is 2-isopropylmalate synthase from Verminephrobacter eiseniae (strain EF01-2).